The following is a 249-amino-acid chain: Metal-staphylopine import system ATP-binding protein CntF (249 aa).

The ABC transporter domain maps to 2-244 (IKVTDVEKSY…DNAYTRELIE (243 aa)). 42–49 (GESGSGKS) lines the ATP pocket.

The protein belongs to the ABC transporter superfamily. As to quaternary structure, the complex is composed of two ATP-binding proteins (CntD and CntF), two transmembrane proteins (CntB and CntC) and a solute-binding protein (CntA).

It is found in the cell membrane. Its function is as follows. Part of the ABC transporter complex CntABCDF (Opp1) involved in the uptake of metal in complex with the metallophore staphylopine (StP). May be involved in the import of a large array of divalent metals ions such as nickel, cobalt, zinc, copper and iron. Probably responsible for energy coupling to the transport system. The sequence is that of Metal-staphylopine import system ATP-binding protein CntF from Staphylococcus aureus (strain Mu50 / ATCC 700699).